We begin with the raw amino-acid sequence, 415 residues long: Prostacyclin receptor (415 aa).

A disordered region spans residues 1–21; it reads MMASDGHPGPPSVTPGSPLSA. The Extracellular segment spans residues 1–44; it reads MMASDGHPGPPSVTPGSPLSAGGREWQGMAGSCWNITYVQDSVG. 2 disulfides stabilise this stretch: Cys-33-Cys-193 and Cys-120-Cys-198. A glycan (N-linked (GlcNAc...) asparagine) is linked at Asn-35. The helical transmembrane segment at 45 to 66 threads the bilayer; the sequence is PATSTLMFVAGVVGNGLALGIL. The Cytoplasmic segment spans residues 67-79; that stretch reads GARRRSHPSAFAV. Residues 80 to 104 traverse the membrane as a helical segment; that stretch reads LVTGLAVTDLLGTCFLSPAVFVAYA. The Extracellular segment spans residues 105–122; the sequence is RNSSLLGLAHGGTMLCDT. Residues 123 to 143 form a helical membrane-spanning segment; that stretch reads FAFAMTFFGLASTLILFAMAV. Residues 144-162 lie on the Cytoplasmic side of the membrane; sequence ERCLALSHPYLYAQLDGPR. The helical transmembrane segment at 163 to 186 threads the bilayer; sequence CARFALPSIYAFCCLFCSLPLLGL. At 187-215 the chain is on the extracellular side; that stretch reads GEHQQYCPGSWCFIRMRSAQPGGCAFSLA. A helical membrane pass occupies residues 216–236; it reads YASLMALLVTSIFFCNGSVTL. Residues 237–263 lie on the Cytoplasmic side of the membrane; sequence SLYHMYRQQRRHHGSFVPTSRAREDEV. A helical transmembrane segment spans residues 264 to 288; sequence YHLILLALMTVIMAVCSLPLMIRGF. Over 289 to 301 the chain is Extracellular; it reads TQAIAPDSREMGD. The helical transmembrane segment at 302–322 threads the bilayer; the sequence is LLAFRFNAFNPILDPWVFILF. Residues 323-415 lie on the Cytoplasmic side of the membrane; the sequence is RKAVFQRLKF…SEAIAACSLC (93 aa). The interval 349 to 370 is disordered; sequence PLSRPASGRRDPPAPTSLQAKE. Ser-365 carries the phosphoserine modification. Cys-412 carries the cysteine methyl ester modification. A lipid anchor (S-farnesyl cysteine) is attached at Cys-412. The propeptide at 413–415 is removed in mature form; sequence SLC.

Belongs to the G-protein coupled receptor 1 family. In terms of assembly, interacts (non-isoprenylated C-terminus) with PDZK1. Post-translationally, isoprenylation does not influence ligand binding but is required for efficient coupling to the effectors adenylyl cyclase and phospholipase C.

Its subcellular location is the cell membrane. In terms of biological role, receptor for prostacyclin (prostaglandin I2 or PGI2). The activity of this receptor is mediated by G(s) proteins which activate adenylate cyclase. The protein is Prostacyclin receptor (Ptgir) of Mus musculus (Mouse).